Consider the following 118-residue polypeptide: Aspartate 1-decarboxylase (118 aa).

The Schiff-base intermediate with substrate; via pyruvic acid role is filled by Ser25. Position 25 is a pyruvic acid (Ser) (Ser25). Residue Thr57 participates in substrate binding. The active-site Proton donor is the Tyr58. Position 73-75 (73-75 (GAA)) interacts with substrate.

This sequence belongs to the PanD family. Heterooctamer of four alpha and four beta subunits. Requires pyruvate as cofactor. Post-translationally, is synthesized initially as an inactive proenzyme, which is activated by self-cleavage at a specific serine bond to produce a beta-subunit with a hydroxyl group at its C-terminus and an alpha-subunit with a pyruvoyl group at its N-terminus.

The protein resides in the cytoplasm. The enzyme catalyses L-aspartate + H(+) = beta-alanine + CO2. It participates in cofactor biosynthesis; (R)-pantothenate biosynthesis; beta-alanine from L-aspartate: step 1/1. Its function is as follows. Catalyzes the pyruvoyl-dependent decarboxylation of aspartate to produce beta-alanine. In Hyphomonas neptunium (strain ATCC 15444), this protein is Aspartate 1-decarboxylase.